The following is a 107-amino-acid chain: MMKVLVVVALLVTLISYSSSEGIDDLEADELLSLMANEQTRKECIPKHHECTSNKHGCCRGNFFKYKCQCTTVVTQDGEQTERCFCGTPPRHKAAELVVGFGKKIFG.

The first 20 residues, 1-20 (MMKVLVVVALLVTLISYSSS), serve as a signal peptide directing secretion. Positions 21–41 (EGIDDLEADELLSLMANEQTR) are excised as a propeptide. 4 disulfide bridges follow: Cys-44–Cys-59, Cys-51–Cys-68, Cys-58–Cys-86, and Cys-70–Cys-84.

This sequence belongs to the neurotoxin 19 (CSTX) family. 04 (U1-Lctx) subfamily. In terms of tissue distribution, expressed by the venom gland.

The protein localises to the secreted. This is U1-lycotoxin-Ls1k from Lycosa singoriensis (Wolf spider).